Here is a 357-residue protein sequence, read N- to C-terminus: UPF0324 membrane protein BMEI1914 (357 aa).

11 helical membrane-spanning segments follow: residues asparagine 29–glutamate 48, alanine 58–alanine 77, serine 90–isoleucine 112, glycine 117–isoleucine 136, leucine 149–alanine 171, alanine 181–leucine 203, isoleucine 210–leucine 232, leucine 242–asparagine 261, proline 268–leucine 290, alanine 300–isoleucine 322, and leucine 334–valine 356.

It belongs to the UPF0324 family.

The protein localises to the cell membrane. In Brucella melitensis biotype 1 (strain ATCC 23456 / CCUG 17765 / NCTC 10094 / 16M), this protein is UPF0324 membrane protein BMEI1914.